Reading from the N-terminus, the 406-residue chain is Alpha-1-antitrypsin (406 aa).

Positions 1–24 (MTSSISWGLLLLAGLCCLVPSFLA) are cleaved as a signal peptide. Ser33 is modified (phosphoserine). Residues Asn59, Asn96, and Asn260 are each glycosylated (N-linked (GlcNAc...) asparagine). The RCL stretch occupies residues 362–381 (GTTVLEAVPMSIPPDVCFKN). Ser372 carries the post-translational modification Phosphoserine.

This sequence belongs to the serpin family. As to quaternary structure, interacts with CELA2A. Interacts with ERGIC3 and LMAN1/ERGIC53. Interacts with PRSS1/Trypsin. Plasma.

It localises to the secreted. In terms of biological role, inhibitor of serine proteases. Can inhibit elastase, trypsin, chymotrypsin and plasmin. This chain is Alpha-1-antitrypsin, found in Meriones unguiculatus (Mongolian jird).